Consider the following 488-residue polypeptide: Malonate-semialdehyde dehydrogenase (488 aa).

Positions 150, 152, 176, 179, 180, 229, and 251 each coordinate NAD(+). Cys284 serves as the catalytic Nucleophile. Residue Glu382 participates in NAD(+) binding.

Belongs to the aldehyde dehydrogenase family. IolA subfamily. Homotetramer.

The enzyme catalyses 3-oxopropanoate + NAD(+) + CoA + H2O = hydrogencarbonate + acetyl-CoA + NADH + H(+). It carries out the reaction 2-methyl-3-oxopropanoate + NAD(+) + CoA + H2O = propanoyl-CoA + hydrogencarbonate + NADH + H(+). It participates in polyol metabolism; myo-inositol degradation into acetyl-CoA; acetyl-CoA from myo-inositol: step 7/7. Its function is as follows. Catalyzes the oxidation of malonate semialdehyde (MSA) and methylmalonate semialdehyde (MMSA) into acetyl-CoA and propanoyl-CoA, respectively. Is involved in a myo-inositol catabolic pathway. Bicarbonate, and not CO2, is the end-product of the enzymatic reaction. The sequence is that of Malonate-semialdehyde dehydrogenase from Listeria monocytogenes serotype 4b (strain CLIP80459).